A 708-amino-acid chain; its full sequence is Polyribonucleotide nucleotidyltransferase (708 aa).

Positions 488 and 494 each coordinate Mg(2+). The KH domain maps to 555–615 (PIIKVTKVDP…ENVDKAIELI (61 aa)). The S1 motif domain maps to 625 to 692 (GEVLEGKVTR…DLGRLQFKRV (68 aa)).

This sequence belongs to the polyribonucleotide nucleotidyltransferase family. Requires Mg(2+) as cofactor.

The protein resides in the cytoplasm. The enzyme catalyses RNA(n+1) + phosphate = RNA(n) + a ribonucleoside 5'-diphosphate. In terms of biological role, involved in mRNA degradation. Catalyzes the phosphorolysis of single-stranded polyribonucleotides processively in the 3'- to 5'-direction. The chain is Polyribonucleotide nucleotidyltransferase from Thermotoga sp. (strain RQ2).